The following is a 367-amino-acid chain: Adenosine deaminase (367 aa).

The Zn(2+) site is built by H46 and H48. A purine D-ribonucleoside is bound by residues 48 to 50 (HLD), D176, and G205. The gating helix loop; regulates binding affinity for substrates and thus substrate selectivity stretch occupies residues 174–188 (TGDGGLSHERMKEAA). H230 provides a ligand contact to Zn(2+). A purine D-ribonucleoside-binding residues include E233, H257, and D314. Position 314 (D314) interacts with Zn(2+).

This sequence belongs to the metallo-dependent hydrolases superfamily. Adenosine and AMP deaminases family. The cofactor is Zn(2+).

The catalysed reaction is adenosine + H2O + H(+) = inosine + NH4(+). It catalyses the reaction S-methyl-5'-thioadenosine + H2O + H(+) = S-methyl-5'-thioinosine + NH4(+). Its pathway is purine metabolism; purine nucleoside salvage. With respect to regulation, inhibited by coformycin and methylthiocoformycin (MT-coformycin). Catalyzes the hydrolytic deamination of adenosine to produce inosine. Unlike mammalian adenosine deaminases, also catalyzes the deamination of 5'-methylthioadenosine (MTA), a by-product of polyamine biosynthesis, to produce 5'-methylthioinosine (MTI). Plays an essential role in the purine salvage pathway which allows the parasite to use host cell purines for the synthesis of nucleic acids. The sequence is that of Adenosine deaminase from Plasmodium falciparum (isolate 3D7).